Reading from the N-terminus, the 407-residue chain is 12S rRNA N(4)-cytidine methyltransferase METTL15 (407 aa).

The tract at residues 44-63 is disordered; sequence EAQEETDQTGIQELHRSQDR. Residues 100-102, Asp119, Phe146, Asp169, and Gln176 each bind S-adenosyl-L-methionine; that span reads GGH. Ser358 bears the Phosphoserine mark. The interval 386–407 is disordered; sequence EDEDVQDNPRGRSAKLRAAIKL. Over residues 397–407 the composition is skewed to basic residues; sequence RSAKLRAAIKL.

Belongs to the methyltransferase superfamily. RsmH family.

The protein localises to the mitochondrion matrix. The catalysed reaction is cytidine(839) in 12S rRNA + S-adenosyl-L-methionine = N(4)-methylcytidine(839) in 12S rRNA + S-adenosyl-L-homocysteine + H(+). Its function is as follows. N4-methylcytidine (m4C) methyltransferase responsible for the methylation of position C839 in mitochondrial 12S rRNA. Involved in the stabilization of 12S rRNA folding, therefore facilitating the assembly of the mitochondrial small ribosomal subunits. This is 12S rRNA N(4)-cytidine methyltransferase METTL15 (METTL15) from Bos taurus (Bovine).